We begin with the raw amino-acid sequence, 96 residues long: Co-chaperonin GroES (96 aa).

Belongs to the GroES chaperonin family. Heptamer of 7 subunits arranged in a ring. Interacts with the chaperonin GroEL.

It localises to the cytoplasm. Functionally, together with the chaperonin GroEL, plays an essential role in assisting protein folding. The GroEL-GroES system forms a nano-cage that allows encapsulation of the non-native substrate proteins and provides a physical environment optimized to promote and accelerate protein folding. GroES binds to the apical surface of the GroEL ring, thereby capping the opening of the GroEL channel. The chain is Co-chaperonin GroES from Actinobacillus succinogenes (strain ATCC 55618 / DSM 22257 / CCUG 43843 / 130Z).